We begin with the raw amino-acid sequence, 191 residues long: MTHELISLPYAVDALAPVISKETVEFHHGKHLKTYVDNLNKLIIGTEFENADLNTIVQKSEGGIFNNAGQTLNHNLYFTQFRPGKGGAPKGKLGEAIDKQFGSFEKFKEEFNTAGTTLFGSGWVWLASDANGKLSIEKEPNAGNPVRKGLNPLLGFDVWEHAYYLTYQNRRADHLKDLWSIVDWDIVESRY.

Residues His-27, His-74, Asp-157, and His-161 each coordinate Fe(3+). Residues His-27, His-74, Asp-157, and His-161 each contribute to the Mn(2+) site.

It belongs to the iron/manganese superoxide dismutase family. In terms of assembly, homodimer. It depends on Mn(2+) as a cofactor. The cofactor is Fe(3+).

It catalyses the reaction 2 superoxide + 2 H(+) = H2O2 + O2. Inhibited by hydrogen peroxide. Destroys superoxide anion radicals which are normally produced within the cells and which are toxic to biological systems. Catalyzes the dismutation of superoxide anion radicals into O2 and H2O2 by successive reduction and oxidation of the transition metal ion at the active site. The protein is Superoxide dismutase [Mn/Fe] (sodB) of Porphyromonas gingivalis (strain ATCC BAA-308 / W83).